Here is a 149-residue protein sequence, read N- to C-terminus: Transcriptional repressor NrdR (149 aa).

The segment at 3 to 34 (CPFCSATDTKVIDSRLVADGHQVRRRRECVQC) is a zinc-finger region. In terms of domain architecture, ATP-cone spans 49–139 (PRVVKQDGSR…VYRAFEDVSE (91 aa)).

It belongs to the NrdR family. Zn(2+) serves as cofactor.

Its function is as follows. Negatively regulates transcription of bacterial ribonucleotide reductase nrd genes and operons by binding to NrdR-boxes. In Shewanella pealeana (strain ATCC 700345 / ANG-SQ1), this protein is Transcriptional repressor NrdR.